A 102-amino-acid polypeptide reads, in one-letter code: Small ribosomal subunit protein uS10 (102 aa).

It belongs to the universal ribosomal protein uS10 family. In terms of assembly, part of the 30S ribosomal subunit.

Its function is as follows. Involved in the binding of tRNA to the ribosomes. The chain is Small ribosomal subunit protein uS10 from Cupriavidus metallidurans (strain ATCC 43123 / DSM 2839 / NBRC 102507 / CH34) (Ralstonia metallidurans).